The following is a 336-amino-acid chain: Holliday junction branch migration complex subunit RuvB (336 aa).

Residues 4-184 form a large ATPase domain (RuvB-L) region; sequence ADRLIQPQVI…FGIPLRLEFY (181 aa). ATP-binding positions include arginine 24, glycine 65, lysine 68, threonine 69, threonine 70, 131–133, arginine 174, tyrosine 184, and arginine 221; that span reads EDY. Position 69 (threonine 69) interacts with Mg(2+). The tract at residues 185–255 is small ATPAse domain (RuvB-S); the sequence is NIKDLSTIVI…VAELALDMLD (71 aa). Positions 258–336 are head domain (RuvB-H); sequence AEGFDYMDRK…HFNLIQPEAK (79 aa). 3 residues coordinate DNA: arginine 294, arginine 313, and arginine 318.

It belongs to the RuvB family. In terms of assembly, homohexamer. Forms an RuvA(8)-RuvB(12)-Holliday junction (HJ) complex. HJ DNA is sandwiched between 2 RuvA tetramers; dsDNA enters through RuvA and exits via RuvB. An RuvB hexamer assembles on each DNA strand where it exits the tetramer. Each RuvB hexamer is contacted by two RuvA subunits (via domain III) on 2 adjacent RuvB subunits; this complex drives branch migration. In the full resolvosome a probable DNA-RuvA(4)-RuvB(12)-RuvC(2) complex forms which resolves the HJ.

The protein localises to the cytoplasm. It carries out the reaction ATP + H2O = ADP + phosphate + H(+). Functionally, the RuvA-RuvB-RuvC complex processes Holliday junction (HJ) DNA during genetic recombination and DNA repair, while the RuvA-RuvB complex plays an important role in the rescue of blocked DNA replication forks via replication fork reversal (RFR). RuvA specifically binds to HJ cruciform DNA, conferring on it an open structure. The RuvB hexamer acts as an ATP-dependent pump, pulling dsDNA into and through the RuvAB complex. RuvB forms 2 homohexamers on either side of HJ DNA bound by 1 or 2 RuvA tetramers; 4 subunits per hexamer contact DNA at a time. Coordinated motions by a converter formed by DNA-disengaged RuvB subunits stimulates ATP hydrolysis and nucleotide exchange. Immobilization of the converter enables RuvB to convert the ATP-contained energy into a lever motion, pulling 2 nucleotides of DNA out of the RuvA tetramer per ATP hydrolyzed, thus driving DNA branch migration. The RuvB motors rotate together with the DNA substrate, which together with the progressing nucleotide cycle form the mechanistic basis for DNA recombination by continuous HJ branch migration. Branch migration allows RuvC to scan DNA until it finds its consensus sequence, where it cleaves and resolves cruciform DNA. This is Holliday junction branch migration complex subunit RuvB from Shewanella piezotolerans (strain WP3 / JCM 13877).